A 472-amino-acid polypeptide reads, in one-letter code: 3-isopropylmalate dehydratase large subunit (472 aa).

[4Fe-4S] cluster-binding residues include Cys353, Cys414, and Cys417.

It belongs to the aconitase/IPM isomerase family. LeuC type 1 subfamily. In terms of assembly, heterodimer of LeuC and LeuD. Requires [4Fe-4S] cluster as cofactor.

It carries out the reaction (2R,3S)-3-isopropylmalate = (2S)-2-isopropylmalate. The protein operates within amino-acid biosynthesis; L-leucine biosynthesis; L-leucine from 3-methyl-2-oxobutanoate: step 2/4. Functionally, catalyzes the isomerization between 2-isopropylmalate and 3-isopropylmalate, via the formation of 2-isopropylmaleate. This Acinetobacter baumannii (strain ACICU) protein is 3-isopropylmalate dehydratase large subunit.